Consider the following 287-residue polypeptide: Formamidopyrimidine-DNA glycosylase (287 aa).

Pro-2 functions as the Schiff-base intermediate with DNA in the catalytic mechanism. Glu-3 (proton donor) is an active-site residue. Lys-61 acts as the Proton donor; for beta-elimination activity in catalysis. The DNA site is built by His-95, Arg-115, and Arg-157. The FPG-type zinc finger occupies 243–277 (NVYGRADQPCRRCGTPVRREAFMNRSSYSCPRCQP). Residue Arg-267 is the Proton donor; for delta-elimination activity of the active site.

The protein belongs to the FPG family. Monomer. Zn(2+) serves as cofactor.

It carries out the reaction Hydrolysis of DNA containing ring-opened 7-methylguanine residues, releasing 2,6-diamino-4-hydroxy-5-(N-methyl)formamidopyrimidine.. The enzyme catalyses 2'-deoxyribonucleotide-(2'-deoxyribose 5'-phosphate)-2'-deoxyribonucleotide-DNA = a 3'-end 2'-deoxyribonucleotide-(2,3-dehydro-2,3-deoxyribose 5'-phosphate)-DNA + a 5'-end 5'-phospho-2'-deoxyribonucleoside-DNA + H(+). Involved in base excision repair of DNA damaged by oxidation or by mutagenic agents. Acts as a DNA glycosylase that recognizes and removes damaged bases. Has a preference for oxidized purines, such as 7,8-dihydro-8-oxoguanine (8-oxoG). Has AP (apurinic/apyrimidinic) lyase activity and introduces nicks in the DNA strand. Cleaves the DNA backbone by beta-delta elimination to generate a single-strand break at the site of the removed base with both 3'- and 5'-phosphates. The polypeptide is Formamidopyrimidine-DNA glycosylase (Salinispora arenicola (strain CNS-205)).